The primary structure comprises 732 residues: Probable boron transporter 3 (732 aa).

Methionine 1 bears the N-acetylmethionine mark. Topologically, residues 1-37 (MDEAESFVPFQGIKKDVKGRLNCYKQDWISGLRAGFR) are cytoplasmic. A helical transmembrane segment spans residues 38–58 (ILAPTTYIFFASAIPVITFGE). Residues 59 to 77 (QLERDTDGKITAVQTLVST) are Extracellular-facing. A helical transmembrane segment spans residues 78–98 (ALCGVIHSIIGGQPLLILGVA). Over 99–123 (EPTVIMYTFMFNFAKSRTDLGSNLF) the chain is Cytoplasmic. The chain crosses the membrane as a helical span at residues 124–144 (LAWTGWVCLWTGLLLFLLAVL). Topologically, residues 145-157 (GACTFINRFTRLA) are extracellular. Residues 158-178 (GELFGILIAMLFMQEAIRGIV) form a helical membrane-spanning segment. The Cytoplasmic segment spans residues 179–197 (DEFGVPGRTNPRSAEFQPA). Residues 198–218 (WVFANGMFGLVLSSGLLYTGL) form a helical membrane-spanning segment. Residues 219–234 (KSRKARSWRFGAEWLR) lie on the Extracellular side of the membrane. The chain crosses the membrane as a helical span at residues 235-255 (GFIADYGVPVMVVVWTCISYI). Topologically, residues 256-291 (PWKSVPQGIPRRLVSPNPWSPGAYQNWTVIKEMVDV) are cytoplasmic. The chain crosses the membrane as a helical span at residues 292–312 (PVLYILLAVVPASMIAVLYYF). Residues 313-339 (DHSVASQLAQQEDFNLRKPPAYHYDLF) lie on the Extracellular side of the membrane. A helical transmembrane segment spans residues 340–360 (LLGFLTILCGLIGIPPSNGVI). The Cytoplasmic segment spans residues 361–463 (PQSPMHTKSL…ILPVEVKEQR (103 aa)). Residues 464-484 (VSNFLQAMMVAGCVAAMPLIK) form a helical membrane-spanning segment. The Extracellular portion of the chain corresponds to 485-556 (RIPSSVLWGY…LFQTAYLLVC (72 aa)). A helical transmembrane segment spans residues 557–577 (FGITWVPVAGVLFPLMIMFLV). At 578–732 (PVRQYVLPNF…QRLSNLGKSV (155 aa)) the chain is on the cytoplasmic side. The tract at residues 695–732 (GGGEISPRSSAGRAPFSPRSATGGGGGEQRLSNLGKSV) is disordered.

It belongs to the anion exchanger (TC 2.A.31.3) family.

Its subcellular location is the membrane. Its function is as follows. Probable boron transporter. Boron is essential for maintaining the integrity of plants cell walls. In Arabidopsis thaliana (Mouse-ear cress), this protein is Probable boron transporter 3 (BOR3).